We begin with the raw amino-acid sequence, 269 residues long: MYDLPLIDNLPVIKRARFFYLYDIHGKRYLDLYLNGGRNFLGYRVQGLNRLFKQTMSRGLISPYPSVFKNQFINLVFTFFKEAGSVYIFKLEKDAKEFLLSLTGKNKFFMPWEKEEGIYEFRVGFSNIKYPMIFNIPLPDFMSVSIVVMDNLSRKIEFKDNFDAVTLSLARHTLSKLLFYKKNIDIDFNSFATPLFRIADRYMLPLYDACYHAEIFNEFLKFGYLISPNFSIPSIVPLKFSKGDLDNFKKLCFALKNKFIDGLDSDPYK.

This sequence to T.pallidum TP0678.

This is an uncharacterized protein from Borreliella burgdorferi (strain ATCC 35210 / DSM 4680 / CIP 102532 / B31) (Borrelia burgdorferi).